A 148-amino-acid polypeptide reads, in one-letter code: Caltractin (148 aa).

EF-hand domains follow at residues 4 to 39 (EQKQDIREAFDLFDTDGSGTIDAKELKVAMRALGFE), 40 to 75 (PKKEEIKKMIADIDKDGSGTIDFEEFLQMMTAKMGE), 77 to 112 (DSREEIMKAFRLFDDDETGKISFKNLKRVAKELGEN), and 113 to 148 (MTDEELQEMIDEADRDGDGEVNEEEFFRIMKKTSLF). Ca(2+)-binding residues include aspartate 17, aspartate 19, serine 21, threonine 23, glutamate 28, aspartate 53, aspartate 55, serine 57, threonine 59, and glutamate 64. Positions 126, 128, 130, 132, and 137 each coordinate Ca(2+).

The protein belongs to the centrin family. As to expression, ubiquitous.

In terms of biological role, this calcium-binding protein is found in the basal body complexes (the functional homolog of the centrosome in animal cell). In mitotic cells it is specifically associated with the poles of the mitotic spindles at the sites of the duplicated basal body complexes. This chain is Caltractin, found in Tetraselmis striata (Green microalga).